Consider the following 305-residue polypeptide: Translation initiation factor eIF2B subunit alpha (305 aa).

Lys35 is subject to N6-acetyllysine.

This sequence belongs to the eIF-2B alpha/beta/delta subunits family. In terms of assembly, component of the translation initiation factor 2B (eIF2B) complex which is a heterodecamer of two sets of five different subunits: alpha, beta, gamma, delta and epsilon. Subunits alpha, beta and delta comprise a regulatory subcomplex and subunits epsilon and gamma comprise a catalytic subcomplex. Within the complex, the hexameric regulatory complex resides at the center, with the two heterodimeric catalytic subcomplexes bound on opposite sides.

The protein resides in the cytoplasm. It localises to the cytosol. With respect to regulation, activated by the chemical integrated stress response (ISR) inhibitor ISRIB which stimulates guanine nucleotide exchange factor activity for both phosphorylated and unphosphorylated eIF2. Its function is as follows. Acts as a component of the translation initiation factor 2B (eIF2B) complex, which catalyzes the exchange of GDP for GTP on eukaryotic initiation factor 2 (eIF2) gamma subunit. Its guanine nucleotide exchange factor activity is repressed when bound to eIF2 complex phosphorylated on the alpha subunit, thereby limiting the amount of methionyl-initiator methionine tRNA available to the ribosome and consequently global translation is repressed. The sequence is that of Translation initiation factor eIF2B subunit alpha (Eif2b1) from Rattus norvegicus (Rat).